The following is a 225-amino-acid chain: tRNA (guanine-N(1)-)-methyltransferase (225 aa).

S-adenosyl-L-methionine is bound by residues Gly-112 and 132 to 137; that span reads IGDYVL.

The protein belongs to the RNA methyltransferase TrmD family. Homodimer.

It is found in the cytoplasm. The enzyme catalyses guanosine(37) in tRNA + S-adenosyl-L-methionine = N(1)-methylguanosine(37) in tRNA + S-adenosyl-L-homocysteine + H(+). Functionally, specifically methylates guanosine-37 in various tRNAs. The sequence is that of tRNA (guanine-N(1)-)-methyltransferase from Flavobacterium psychrophilum (strain ATCC 49511 / DSM 21280 / CIP 103535 / JIP02/86).